A 124-amino-acid polypeptide reads, in one-letter code: Small ribosomal subunit protein bS6 (124 aa).

Positions 96-124 are disordered; that stretch reads ETAPSPMMKEVQREEARKAAQTTTEGQAA. The segment covering 115–124 has biased composition (polar residues); that stretch reads AQTTTEGQAA.

Belongs to the bacterial ribosomal protein bS6 family.

Functionally, binds together with bS18 to 16S ribosomal RNA. In Cupriavidus necator (strain ATCC 17699 / DSM 428 / KCTC 22496 / NCIMB 10442 / H16 / Stanier 337) (Ralstonia eutropha), this protein is Small ribosomal subunit protein bS6.